The following is a 378-amino-acid chain: Queuine tRNA-ribosyltransferase (378 aa).

The active-site Proton acceptor is the D89. Substrate is bound by residues 89 to 93, D143, Q187, and G214; that span reads DSGGF. Residues 245 to 251 form an RNA binding region; sequence GVGKPED. The Nucleophile role is filled by D264. The tract at residues 269-273 is RNA binding; important for wobble base 34 recognition; the sequence is TRNAR. The Zn(2+) site is built by C302, C304, C307, and H333.

The protein belongs to the queuine tRNA-ribosyltransferase family. Homodimer. Within each dimer, one monomer is responsible for RNA recognition and catalysis, while the other monomer binds to the replacement base PreQ1. Zn(2+) serves as cofactor.

The enzyme catalyses 7-aminomethyl-7-carbaguanine + guanosine(34) in tRNA = 7-aminomethyl-7-carbaguanosine(34) in tRNA + guanine. It functions in the pathway tRNA modification; tRNA-queuosine biosynthesis. Its function is as follows. Catalyzes the base-exchange of a guanine (G) residue with the queuine precursor 7-aminomethyl-7-deazaguanine (PreQ1) at position 34 (anticodon wobble position) in tRNAs with GU(N) anticodons (tRNA-Asp, -Asn, -His and -Tyr). Catalysis occurs through a double-displacement mechanism. The nucleophile active site attacks the C1' of nucleotide 34 to detach the guanine base from the RNA, forming a covalent enzyme-RNA intermediate. The proton acceptor active site deprotonates the incoming PreQ1, allowing a nucleophilic attack on the C1' of the ribose to form the product. After dissociation, two additional enzymatic reactions on the tRNA convert PreQ1 to queuine (Q), resulting in the hypermodified nucleoside queuosine (7-(((4,5-cis-dihydroxy-2-cyclopenten-1-yl)amino)methyl)-7-deazaguanosine). This Yersinia enterocolitica serotype O:8 / biotype 1B (strain NCTC 13174 / 8081) protein is Queuine tRNA-ribosyltransferase.